Reading from the N-terminus, the 409-residue chain is Probable ATP-dependent RNA helicase MG308 homolog (409 aa).

The Helicase ATP-binding domain occupies 26–179 (VFKVWPRQNV…RKQVAPLTVV (154 aa)). 39-46 (AETGSGKT) contributes to the ATP binding site. Positions 126–129 (DEVD) match the DEVD box motif. The Helicase C-terminal domain maps to 190–349 (LVKHFLLNLN…SVHLERDGTL (160 aa)).

The protein belongs to the DEAD box helicase family.

The enzyme catalyses ATP + H2O = ADP + phosphate + H(+). The polypeptide is Probable ATP-dependent RNA helicase MG308 homolog (Mycoplasma pneumoniae (strain ATCC 29342 / M129 / Subtype 1) (Mycoplasmoides pneumoniae)).